A 320-amino-acid chain; its full sequence is Fructose-1,6-bisphosphatase class 1 (320 aa).

Mg(2+) contacts are provided by Glu-105, Asp-124, Leu-126, and Asp-127. Substrate is bound by residues 127–130 (DGSS), Tyr-233, and Lys-263. Residue Glu-269 participates in Mg(2+) binding.

Belongs to the FBPase class 1 family. In terms of assembly, homotetramer. Mg(2+) is required as a cofactor.

The protein resides in the cytoplasm. The catalysed reaction is beta-D-fructose 1,6-bisphosphate + H2O = beta-D-fructose 6-phosphate + phosphate. It participates in carbohydrate biosynthesis; gluconeogenesis. The polypeptide is Fructose-1,6-bisphosphatase class 1 (Methanocorpusculum labreanum (strain ATCC 43576 / DSM 4855 / Z)).